Here is a 35-residue protein sequence, read N- to C-terminus: Mu-theraphotoxin-Pn3b (35 aa).

Disulfide bonds link C2/C16, C9/C21, and C15/C28.

Belongs to the neurotoxin 10 (Hwtx-1) family. 28 (Jztx-11) subfamily. Expressed by the venom gland.

Its subcellular location is the secreted. In terms of biological role, gating-modifier toxin that targets voltage-gated sodium channels with a preferential activity on Nav1.7/SCN9A. On Nav1.7/SCN9A, the toxin acts by shifting the voltage-dependence of activation to more depolarized potentials, whereas it does not cause significant effect on the voltage-dependence of activation on other sodium channels. Minor effects are observed on the voltage-dependence of steady-state fast inactivation for all sodium channels tested (Nav1.1/SCN1A-Nav1.8/SCN10A). By testing the toxin on channel chimera, it has been shown to interact with the S3-S4 linkers in DII and DIV domains of Nav1.7/SCN9A. In vivo, the toxin dose-dependently reduces OD1-induced spontaneous pain behaviors. This chain is Mu-theraphotoxin-Pn3b, found in Pamphobeteus nigricolor (Giant blue bloom tarantula).